The following is a 156-amino-acid chain: Flagellar assembly factor FliW (156 aa).

This sequence belongs to the FliW family. In terms of assembly, interacts with translational regulator CsrA and flagellin(s).

The protein localises to the cytoplasm. In terms of biological role, acts as an anti-CsrA protein, binds CsrA and prevents it from repressing translation of its target genes, one of which is flagellin. Binds to flagellin and participates in the assembly of the flagellum. The sequence is that of Flagellar assembly factor FliW from Lachnoclostridium phytofermentans (strain ATCC 700394 / DSM 18823 / ISDg) (Clostridium phytofermentans).